A 255-amino-acid chain; its full sequence is Glutamate racemase (255 aa).

Substrate is bound by residues 7–8 (DS) and 39–40 (YG). Catalysis depends on Cys-70, which acts as the Proton donor/acceptor. Residue 71 to 72 (NT) participates in substrate binding. Cys-181 acts as the Proton donor/acceptor in catalysis. Substrate is bound at residue 182–183 (TH).

The protein belongs to the aspartate/glutamate racemases family.

It carries out the reaction L-glutamate = D-glutamate. It participates in cell wall biogenesis; peptidoglycan biosynthesis. Functionally, provides the (R)-glutamate required for cell wall biosynthesis. This chain is Glutamate racemase, found in Helicobacter pylori (strain Shi470).